A 105-amino-acid chain; its full sequence is Replication restart protein PriB (105 aa).

The region spanning 1–102 (MTTNRLVLSG…LHAEQIEFID (102 aa)) is the SSB domain.

It belongs to the PriB family. In terms of assembly, homodimer. Interacts with PriA and DnaT. Component of the replication restart primosome. Primosome assembly occurs via a 'hand-off' mechanism. PriA binds to replication forks, subsequently PriB then DnaT bind; DnaT then displaces ssDNA to generate the helicase loading substrate.

Functionally, involved in the restart of stalled replication forks, which reloads the replicative helicase on sites other than the origin of replication; the PriA-PriB pathway is the major replication restart pathway. During primosome assembly it facilitates complex formation between PriA and DnaT on DNA; stabilizes PriA on DNA. Stimulates the DNA unwinding activity of PriA helicase. In Yersinia pseudotuberculosis serotype O:1b (strain IP 31758), this protein is Replication restart protein PriB.